Reading from the N-terminus, the 159-residue chain is Transcription elongation factor GreA (159 aa).

Residues 47 to 73 (AEYDAAREEQSLTEAHIADLENKLSTA) are a coiled coil.

This sequence belongs to the GreA/GreB family.

Its function is as follows. Necessary for efficient RNA polymerase transcription elongation past template-encoded arresting sites. The arresting sites in DNA have the property of trapping a certain fraction of elongating RNA polymerases that pass through, resulting in locked ternary complexes. Cleavage of the nascent transcript by cleavage factors such as GreA or GreB allows the resumption of elongation from the new 3'terminus. GreA releases sequences of 2 to 3 nucleotides. In Chlorobium phaeobacteroides (strain DSM 266 / SMG 266 / 2430), this protein is Transcription elongation factor GreA.